The sequence spans 225 residues: Venom allergen 5 (225 aa).

Positions 1–23 (MKISGFVYLILITTIINLSFSEA) are cleaved as a signal peptide. Disulfide bonds link C27–C39, C31–C124, C49–C117, and C191–C208. An SCP domain is found at 69-210 (KQHNEFRQKV…WHRHYLVCNY (142 aa)).

This sequence belongs to the CRISP family. Venom allergen 5-like subfamily. In terms of tissue distribution, expressed by the venom gland.

The protein localises to the secreted. This is Venom allergen 5 from Vespa magnifica (Hornet).